Reading from the N-terminus, the 131-residue chain is Peptide methionine sulfoxide reductase MsrB (131 aa).

Residues 8-130 (LDEWRSMLDP…NSVCIDLRPR (123 aa)) form the MsrB domain. Zn(2+) contacts are provided by Cys-47, Cys-50, Cys-96, and Cys-99. Cys-119 (nucleophile) is an active-site residue.

It belongs to the MsrB Met sulfoxide reductase family. Requires Zn(2+) as cofactor.

It catalyses the reaction L-methionyl-[protein] + [thioredoxin]-disulfide + H2O = L-methionyl-(R)-S-oxide-[protein] + [thioredoxin]-dithiol. This chain is Peptide methionine sulfoxide reductase MsrB, found in Pseudomonas putida (strain GB-1).